Reading from the N-terminus, the 117-residue chain is Transcription elongation factor A protein-like 8 (117 aa).

A disordered region spans residues 1–82; that stretch reads MQKSCDENEG…EEVIRGVDEL (82 aa). Positions 41–82 are enriched in basic and acidic residues; sequence NVREETEGSHRGEPAEPSPEPKEDTPARHLNPEEVIRGVDEL. Residues 73 to 100 adopt a coiled-coil conformation; sequence EEVIRGVDELERLREEIRRVRNKFVLMH.

Belongs to the TFS-II family. TFA subfamily.

The protein localises to the nucleus. Its function is as follows. May be involved in transcriptional regulation. The chain is Transcription elongation factor A protein-like 8 (Tceal8) from Mus musculus (Mouse).